The following is a 295-amino-acid chain: 4-hydroxy-tetrahydrodipicolinate synthase (295 aa).

Thr-47 contacts pyruvate. The Proton donor/acceptor role is filled by Tyr-135. Lys-163 (schiff-base intermediate with substrate) is an active-site residue. Residue Ile-206 participates in pyruvate binding.

It belongs to the DapA family. As to quaternary structure, homodimer.

The protein resides in the cytoplasm. The catalysed reaction is L-aspartate 4-semialdehyde + pyruvate = (2S,4S)-4-hydroxy-2,3,4,5-tetrahydrodipicolinate + H2O + H(+). It functions in the pathway amino-acid biosynthesis; L-lysine biosynthesis via DAP pathway; (S)-tetrahydrodipicolinate from L-aspartate: step 3/4. In terms of biological role, catalyzes the condensation of (S)-aspartate-beta-semialdehyde [(S)-ASA] and pyruvate to 4-hydroxy-tetrahydrodipicolinate (HTPA). The sequence is that of 4-hydroxy-tetrahydrodipicolinate synthase from Staphylococcus saprophyticus subsp. saprophyticus (strain ATCC 15305 / DSM 20229 / NCIMB 8711 / NCTC 7292 / S-41).